The chain runs to 472 residues: Ribosomal protein uS12 methylthiotransferase RimO (472 aa).

An MTTase N-terminal domain is found at 33–143 (NRIGFVSLGC…VLKHVHKYVP (111 aa)). Positions 42, 78, 107, 175, 179, and 182 each coordinate [4Fe-4S] cluster. The Radical SAM core domain maps to 161–398 (LTPKHYAYLK…MELQAEISAE (238 aa)). The TRAM domain maps to 401-467 (ARFVGRTLDI…EHDLWAEVVD (67 aa)).

The protein belongs to the methylthiotransferase family. RimO subfamily. It depends on [4Fe-4S] cluster as a cofactor.

The protein resides in the cytoplasm. It carries out the reaction L-aspartate(89)-[ribosomal protein uS12]-hydrogen + (sulfur carrier)-SH + AH2 + 2 S-adenosyl-L-methionine = 3-methylsulfanyl-L-aspartate(89)-[ribosomal protein uS12]-hydrogen + (sulfur carrier)-H + 5'-deoxyadenosine + L-methionine + A + S-adenosyl-L-homocysteine + 2 H(+). In terms of biological role, catalyzes the methylthiolation of an aspartic acid residue of ribosomal protein uS12. This is Ribosomal protein uS12 methylthiotransferase RimO from Shewanella putrefaciens (strain CN-32 / ATCC BAA-453).